Consider the following 142-residue polypeptide: Anti-sigma F factor (142 aa).

It belongs to the anti-sigma-factor family.

It catalyses the reaction L-seryl-[protein] + ATP = O-phospho-L-seryl-[protein] + ADP + H(+). The catalysed reaction is L-threonyl-[protein] + ATP = O-phospho-L-threonyl-[protein] + ADP + H(+). Binds to sigma F and blocks its ability to form an RNA polymerase holoenzyme (E-sigma F). Phosphorylates SpoIIAA on a serine residue. This phosphorylation may enable SpoIIAA to act as an anti-anti-sigma factor that counteracts SpoIIAB and thus releases sigma F from inhibition. The chain is Anti-sigma F factor from Clostridium kluyveri (strain NBRC 12016).